The chain runs to 335 residues: Nucleoid-associated protein CKO_00588 (335 aa).

The protein belongs to the YejK family.

It is found in the cytoplasm. The protein localises to the nucleoid. This is Nucleoid-associated protein CKO_00588 from Citrobacter koseri (strain ATCC BAA-895 / CDC 4225-83 / SGSC4696).